The following is an 84-amino-acid chain: Envelope small membrane protein (84 aa).

The Virion surface segment spans residues 1–18; that stretch reads MFMADAYFADTVWYVGQI. A helical membrane pass occupies residues 19 to 39; the sequence is IFIVAICLLVIIVVVAFLATF. Over 40 to 80 the chain is Intravirion; it reads KLCIQLCGMCNTLGLSPSIYVFNRGRQFYEFYNDVKPPVLD.

The protein belongs to the betacoronaviruses E protein family. In terms of assembly, homopentamer. Interacts with membrane protein M in the budding compartment of the host cell, which is located between endoplasmic reticulum and the Golgi complex. Interacts with Nucleoprotein.

It localises to the host Golgi apparatus membrane. In terms of biological role, plays a central role in virus morphogenesis and assembly. Acts as a viroporin and self-assembles in host membranes forming pentameric protein-lipid pores that allow ion transport. Also plays a role in the induction of apoptosis. The chain is Envelope small membrane protein from Bos taurus (Bovine).